The primary structure comprises 876 residues: MSKQATLFDFSIKKNESKEQTNQESVEVPKQTANRTKIEWIKEAEDGKVYFLLQVDYDGKKSRAVCKLYDKEGKKIYIMQDESGHKPYFLTDIDPDKVNKITKVVRDPSFDHLELINKVDPYTGKKIRLTKIVVKDPLAVRRMRSSLPKAYEAHIKYYNNYVYDNGLIPGLIYKVNKGKLTQLNPELKGEEINEIKKAFADADEMTKETVNDWIPILETEVPDIKRVSLDIEVYTPNRGRIPDPERAEFPIISVALAGNDGSKIVLALKREDVNSDFSKKDGVQVEIFDSEKKLLARLFEIIREYPMLLTFNGDDFDIPYIYFRALRLNFSPEEVPLDVVSGEGKFLAGIHIDLYKFFFNRAVRIYAFEGKYSEYSLDAVATALLGISKVKLDTFISFLDIDKLIEYNLRDAEITLKLTTFNNNLVLKLMVLLARISKLGLEELTRTEVSTWIKNLYYWEHRKRNWLIPLKEEILVRSNQVKTAAVIKGKKYKGAVVIDPPAGVYFNVVVLDFASLYPSIIKNWNISYETIDIDECTKKVWVEDETGEKLHYVCMDKPGITAVITGLIRDFRVKVYKKKAKYSNISEEQRSLYDVVQRAMKVFINATYGVFGAENFPLYAPAVAESVTAIGRYIITTTYKQAEKLNLKVIYGDTDSLFLYNPTKDKLEELIKFVKQNFNLDLEVDKSYKYVAFSGLKKNYFGVYPDGKTEIKGMLAKKRNTPEFIKKEFAEIKNMLASLNSPNDIPEVKNKLEIKIKDIYNKLRNKGYNLDDLAFRIMLSKPLDSYTKNTPQHVKAGLQLRAFGVNVLPRDVIMFVKVKSKDGVKPIQLAKISEIDIEKYVETLRTTFEQILKAFGISWDEIVSTISIDSFFGSKK.

It belongs to the DNA polymerase type-B family.

The catalysed reaction is DNA(n) + a 2'-deoxyribonucleoside 5'-triphosphate = DNA(n+1) + diphosphate. Its function is as follows. This polymerase possesses two enzymatic activities: DNA synthesis (polymerase) and an exonucleolytic activity that degrades single-stranded DNA in the 3'- to 5'-direction. This chain is DNA polymerase 1 (dpo1), found in Sulfolobus acidocaldarius (strain ATCC 33909 / DSM 639 / JCM 8929 / NBRC 15157 / NCIMB 11770).